The chain runs to 940 residues: Antiviral innate immune response receptor RIG-I (940 aa).

2 CARD domains span residues 1–87 (MTAE…GLCE) and 92–172 (WDFQ…KTLK). Residues Lys48, Lys96, Lys154, Lys164, Lys172, and Lys190 each participate in a glycyl lysine isopeptide (Lys-Gly) (interchain with G-Cter in ubiquitin) cross-link. The interval 219 to 928 (ENQNLSQNSC…LSFDAAEMAG (710 aa)) is interaction with ZC3HAV1. A Helicase ATP-binding domain is found at 249 to 428 (ALPAQNGKNT…AEATEYICKL (180 aa)). 262–269 (APTGCGKT) contributes to the ATP binding site. The DECH box signature appears at 370-373 (DECH). The 167-residue stretch at 613-779 (KLRDLCFILQ…ILQTWDEAVF (167 aa)) folds into the Helicase C-terminal domain. Residues 738-928 (GSKCFLLTAN…LSFDAAEMAG (191 aa)) are mediates interaction with RNF135. Thr773 is subject to Phosphothreonine; by CK2. The RLR CTR domain maps to 795 to 928 (DNQGKPEPVP…LSFDAAEMAG (134 aa)). A Zn(2+)-binding site is contributed by Cys813. Residue Lys815 forms a Glycyl lysine isopeptide (Lys-Gly) (interchain with G-Cter in ubiquitin) linkage. Cys816 provides a ligand contact to Zn(2+). N6-acetyllysine is present on Lys861. Zn(2+)-binding residues include Cys867 and Cys872. Position 912 is an N6-acetyllysine (Lys912).

This sequence belongs to the helicase family. RLR subfamily. Monomer; maintained as a monomer in an autoinhibited state. Upon binding of viral RNAs and conformational shift, homooligomerizes and forms filaments on these molecules. Interacts (via tandem CARD domain) with MAVS/IPS1 promoting its filamentation. Interacts with DHX58/LGP2, IKBKE, TBK1 and STING1. Interacts (via CARD domain) with TRIM25 (via SPRY domain). Interacts (double-stranded RNA-bound oligomeric form) with RNF135 (homodimer); involved in RNA length-dependent activation of the RIG-I signaling pathway. Interacts with CYLD. Interacts with NLRC5; blocks the interaction of MAVS/IPS1 to RIGI. Interacts with SRC. Interacts with DDX60. Interacts with ZC3HAV1 (via zinc-fingers) in an RNA-dependent manner. Interacts (via tandem CARD domain) with SEC14L1; the interaction is direct and impairs the interaction of RIGI with MAVS/IPS1. Interacts with VCP/p97; interaction is direct and allows the recruitment of RNF125 and subsequent ubiquitination and degradation. Interacts with NOP53; may regulate RIGI through USP15-mediated 'Lys-63'-linked deubiquitination. Interacts with SIGLEC10, CBL and PTPN11; within a negative feedback loop leading to RIGI degradation. Interacts with LRRC25. Interacts with ZCCHC3; leading to activation of RIGI. Interacts with RNF123. Interacts with UBE2D3 and UBE2N; E2 ubiquitin ligases involved in RNF135-mediated ubiquitination of RIGI and activation of the RIG-I signaling pathway. Interacts with IFIT3. Interacts with DDX3X. Interacts with RTN3. Interacts with ARL16; this interaction is GTP-dependent and induced upon viral infection; this interaction suppresses the RNA sensing activity of RIGI. Interacts with DHX16; this interaction enhances RIGI-mediated antiviral response. Interacts with IRGM; promoting RIGI degradation. Interacts with IFI6; this interaction inhibits RIGI activation. Interacts with ECSIT; this interaction bridges RIGI to the MAVS complex at the mitochondrion. Interacts with YWHAE; this interaction drives RIGI at the mitochondrion. In terms of processing, phosphorylated in resting cells and dephosphorylated in RNA virus-infected cells. Phosphorylation at Thr-773 results in inhibition of its activity while dephosphorylation at these sites results in its activation. Post-translationally, ISGylated. Conjugated to ubiquitin-like protein ISG15 upon IFN-beta stimulation. ISGylation negatively regulates its function in antiviral signaling response. Sumoylated, probably by MUL1; inhibiting its polyubiquitination. In terms of processing, acetylated in response to RNA virus infection. Deacetylated by HDAC6 in the presence of viral mRNAs which is required for detection of viral RNA by RIGI. Post-translationally, ubiquitinated. 'Lys-63' ubiquitination by RNF135, which occurs after RNA-binding and homodimerization, releases the autoinhibition of the CARD domains by the RLR CTR domain, an essential step in the activation of the RIG-I signaling pathway. Also ubiquitinated by TRIM4. Also undergoes 'Lys-48' ubiquitination by RNF125 that leads to proteasomal degradation. 'Lys-48' ubiquitination follows viral infection and is enhanced by 'Lys-63'-linked ubiquitination of the CARD domains that promotes interaction with VCP/p97 and subsequent recruitment of RNF125. Within a negative feedback loop involving SIGLEC10 and PTPN11, 'Lys-48' ubiquitination at Lys-815 by CBL also elicits the proteasomal degradation of RIGI. Deubiquitinated by CYLD, a protease that selectively cleaves 'Lys-63'-linked ubiquitin chains. Also probably deubiquitinated by USP17L2/USP17 that cleaves 'Lys-48'- and 'Lys-63'-linked ubiquitin chains and positively regulates the receptor. Ubiquitinated by TRIM40 via 'Lys-48'-linked ubiquitination; leading to proteasomal degradation. Deubiquitinated by USP27X that cleaves 'Lys-63'-linked ubiquitin chains and inhibits the innate immune receptor activity. Deubiquitinated by USP3 that also cleaves 'Lys-63'-linked ubiquitin chains and inhibits the innate immune receptor activity. Degraded via selective autophagy following interaction with IRGM. IRGM promotes RIGI recruitment to autophagosome membranes, promoting its SQSTM1/p62-dependent autophagic degradation. As to expression, ubiquitously expressed, with highest levels in spleen, liver, intestine and heart. Up-regulated in tracheobronchial lymph node and tonsils during porcine reproductive and respiratory syndrome virus (PRRSV) infection.

It localises to the cytoplasm. Its subcellular location is the cell projection. It is found in the ruffle membrane. The protein resides in the cytoskeleton. The protein localises to the cell junction. It localises to the tight junction. The catalysed reaction is ATP + H2O = ADP + phosphate + H(+). In terms of biological role, innate immune receptor that senses cytoplasmic viral nucleic acids and activates a downstream signaling cascade leading to the production of type I interferons and pro-inflammatory cytokines. Forms a ribonucleoprotein complex with viral RNAs on which it homooligomerizes to form filaments. The homooligomerization allows the recruitment of RNF135 an E3 ubiquitin-protein ligase that activates and amplifies the RIG-I-mediated antiviral signaling in an RNA length-dependent manner through ubiquitination-dependent and -independent mechanisms. Upon activation, associates with mitochondria antiviral signaling protein (MAVS/IPS1) that activates the IKK-related kinases TBK1 and IKBKE which in turn phosphorylate the interferon regulatory factors IRF3 and IRF7, activating transcription of antiviral immunological genes including the IFN-alpha and IFN-beta interferons. Ligands include: 5'-triphosphorylated ssRNA and dsRNA and short dsRNA (&lt;1 kb in length). In addition to the 5'-triphosphate moiety, blunt-end base pairing at the 5'-end of the RNA is very essential. Overhangs at the non-triphosphorylated end of the dsRNA RNA have no major impact on its activity. A 3'overhang at the 5'triphosphate end decreases and any 5'overhang at the 5' triphosphate end abolishes its activity. Detects both positive and negative strand RNA viruses including members of the families Paramyxoviridae, Rhabdoviridae: vesicular stomatitis virus (VSV) Orthomyxoviridae: influenza A and B virus, Flaviviridae: Japanese encephalitis virus (JEV). It also detects rotavirus and reovirus. Also involved in antiviral signaling in response to viruses containing a dsDNA genome. Detects dsRNA produced from non-self dsDNA by RNA polymerase III. May play important roles in granulocyte production and differentiation, bacterial phagocytosis and in the regulation of cell migration. In Sus scrofa (Pig), this protein is Antiviral innate immune response receptor RIG-I.